Reading from the N-terminus, the 664-residue chain is Protein IQ-DOMAIN 28 (664 aa).

The disordered stretch occupies residues 1–85; the sequence is MGKTPGKWIK…DESKDNLESR (85 aa). Residues 51 to 64 show a composition bias toward low complexity; the sequence is VDPPVVSSQPVPAS. Residues 76–85 show a composition bias toward basic and acidic residues; the sequence is DESKDNLESR. 3 consecutive IQ domains span residues 93–121, 122–140, and 144–170; these read LEQA…GIIR, LQAV…ATYS, and GIVK…QKKH. Positions 106–116 are calmodulin-binding; that stretch reads AHQARRAFRTL. Disordered stretches follow at residues 244–488, 502–573, and 637–664; these read EIPK…KEKD, DEKS…SGRK, and AKGS…DWKR. A Nuclear localization signal 1 motif is present at residues 251-258; that stretch reads KKRNYQAV. Residues 305–315 show a composition bias toward basic and acidic residues; that stretch reads DPLRNESDKAN. Low complexity predominate over residues 339 to 353; it reads SPSLKRSSLSNGSKK. The Nuclear localization signal 2 signature appears at 351 to 358; sequence SKKATLRS. Basic and acidic residues-rich tracts occupy residues 358–367, 427–447, and 502–532; these read SAEKKKKDIP, TEKE…KVLE, and DEKS…KCAD. Polar residues predominate over residues 536–547; the sequence is SSENGNVGSDNT. A compositionally biased stretch (basic and acidic residues) spans 652-664; that stretch reads DITHKSTRTDWKR.

Belongs to the IQD family. Binds to multiple calmodulin (CaM) in the presence of Ca(2+) and CaM-like proteins.

The protein resides in the nucleus. The protein localises to the cytoplasm. It is found in the cytoskeleton. Its function is as follows. May be involved in cooperative interactions with calmodulins or calmodulin-like proteins. Recruits calmodulin proteins to microtubules, thus being a potential scaffold in cellular signaling and trafficking. May associate with nucleic acids and regulate gene expression at the transcriptional or post-transcriptional level. This chain is Protein IQ-DOMAIN 28, found in Arabidopsis thaliana (Mouse-ear cress).